The following is a 467-amino-acid chain: NALCN channel auxiliary factor 1 (467 aa).

A helical membrane pass occupies residues 40 to 60; it reads LSLASLLFFTVLLSDHLWFCA. A disordered region spans residues 121–161; the sequence is MGESSPAAQAHRLLSASSSPTLPPSPGGGGGSKGNRGKNNR. Asn160, Asn226, and Asn254 each carry an N-linked (GlcNAc...) asparagine glycan. 7 cysteine pairs are disulfide-bonded: Cys200-Cys270, Cys235-Cys322, Cys255-Cys270, Cys313-Cys350, Cys333-Cys386, Cys339-Cys385, and Cys343-Cys370. A compositionally biased stretch (basic and acidic residues) spans 390–408; the sequence is SEEQTAPRPKGTVDRRDSC. Residues 390–409 are disordered; that stretch reads SEEQTAPRPKGTVDRRDSCP. A helical membrane pass occupies residues 426-446; it reads LKLCVLVLILLHTVLTASAAQ. A glycan (N-linked (GlcNAc...) asparagine) is linked at Asn462.

This sequence belongs to the NALF family. Component of the NALCN channel complex. NALCN complex consists of NALCN and auxiliary subunits, UNC79, UNC80 and NACL1. These auxiliary subunits are essential for the NALCN channel function.

It is found in the cell membrane. Its function is as follows. Auxillary component of the NALCN sodium channel complex, a channel that regulates the resting membrane potential and controls neuronal excitability. The polypeptide is NALCN channel auxiliary factor 1 (Mus musculus (Mouse)).